The sequence spans 133 residues: Large ribosomal subunit protein bL17 (133 aa).

It belongs to the bacterial ribosomal protein bL17 family. In terms of assembly, part of the 50S ribosomal subunit. Contacts protein L32.

The chain is Large ribosomal subunit protein bL17 from Nitratidesulfovibrio vulgaris (strain ATCC 29579 / DSM 644 / CCUG 34227 / NCIMB 8303 / VKM B-1760 / Hildenborough) (Desulfovibrio vulgaris).